Reading from the N-terminus, the 808-residue chain is Protein translocase subunit SecA (808 aa).

ATP contacts are provided by residues Q87, 105-109, and D493; that span reads GEGKT.

Belongs to the SecA family. As to quaternary structure, monomer and homodimer. Part of the essential Sec protein translocation apparatus which comprises SecA, SecYEG and auxiliary proteins SecDF. Other proteins may also be involved.

The protein localises to the cell membrane. It localises to the cytoplasm. It catalyses the reaction ATP + H2O + cellular proteinSide 1 = ADP + phosphate + cellular proteinSide 2.. Its function is as follows. Part of the Sec protein translocase complex. Interacts with the SecYEG preprotein conducting channel. Has a central role in coupling the hydrolysis of ATP to the transfer of proteins into and across the cell membrane, serving as an ATP-driven molecular motor driving the stepwise translocation of polypeptide chains across the membrane. The chain is Protein translocase subunit SecA from Mycoplasma pneumoniae (strain ATCC 29342 / M129 / Subtype 1) (Mycoplasmoides pneumoniae).